Here is a 458-residue protein sequence, read N- to C-terminus: Hepatocyte nuclear factor 3-beta (458 aa).

The transactivation domain 1 stretch occupies residues 14–93 (DWSSYYAEPE…AGAMAGMSGS (80 aa)). Positions 106–113 (LSPSLSPL) match the Nuclear localization signal motif. Thr156 is modified (phosphothreonine; by PKB/AKT1). The segment at residues 159–252 (KPPYSYISLI…ENGCYLRRQK (94 aa)) is a DNA-binding region (fork-head). Phosphoserine is present on residues Ser212 and Ser283. Residues 286 to 365 (QLGEAAGSAS…PGLPPEAHLK (80 aa)) are disordered. Residues 294-310 (ASETPAGTESPHSSASP) show a composition bias toward polar residues. Thr301 is modified (phosphothreonine). Phosphoserine is present on residues Ser303, Ser306, Ser307, and Ser309. A compositionally biased stretch (low complexity) spans 339-352 (PGQQQQAAAHLLGP). Positions 361–458 (EAHLKPEHHY…VYSRPIMNSS (98 aa)) are transactivation domain 2. Phosphoserine occurs at positions 437 and 458.

In terms of assembly, binds DNA as a monomer. Binds TLE1. Interacts with FOXA1 and FOXA3. Interacts with PRKDC. Interacts with AKT1. Interacts with TET1; this interaction may recruit TET1 to specific genomic loci to mediate their demethylation. Post-translationally, phosphorylation on Thr-156 abolishes binding to target promoters and subsequent transcription activation upon insulin stimulation. Liver.

The protein localises to the nucleus. Its subcellular location is the cytoplasm. Its function is as follows. Transcription factor that is involved in embryonic development, establishment of tissue-specific gene expression and regulation of gene expression in differentiated tissues. Is thought to act as a 'pioneer' factor opening the compacted chromatin for other proteins through interactions with nucleosomal core histones and thereby replacing linker histones at target enhancer and/or promoter sites. Binds DNA with the consensus sequence 5'-[AC]A[AT]T[AG]TT[GT][AG][CT]T[CT]-3'. In embryonic development is required for notochord formation. Involved in the development of multiple endoderm-derived organ systems such as the liver, pancreas and lungs; FOXA1 and FOXA2 seem to have at least in part redundant roles. Originally described as a transcription activator for a number of liver genes such as AFP, albumin, tyrosine aminotransferase, PEPCK, etc. Interacts with the cis-acting regulatory regions of these genes. Involved in glucose homeostasis; regulates the expression of genes important for glucose sensing in pancreatic beta-cells and glucose homeostasis. Involved in regulation of fat metabolism. Acts synergistically with ONECUT1 to activate transcription of female-specific CYP2C12; the function is inhibited by growth hormone-activated STAT5B. Acts synergistically with HNF4A to activate transcription of APOA1. The sequence is that of Hepatocyte nuclear factor 3-beta (Foxa2) from Rattus norvegicus (Rat).